The sequence spans 407 residues: Nuclear hormone receptor family member nhr-86 (407 aa).

The segment at residues 21–96 (KSTCSICRED…VGMNPAGVQQ (76 aa)) is a DNA-binding region (nuclear receptor). NR C4-type zinc fingers lie at residues 24-44 (CSIC…CRAC) and 60-79 (CRGN…CRSC). In terms of domain architecture, NR LBD spans 130 to 405 (AQSALVEDLH…KDFYDLVNGK (276 aa)). Positions 394–405 (PPKDFYDLVNGK) are AF-2.

It belongs to the nuclear hormone receptor family. Expressed in intestinal epithelial cells, excretory gland cells and in several head neurons.

It is found in the nucleus. Functionally, nuclear receptor which acts as a transcription activator. Binds small molecule ligands, such as phenazine 1-carboxamide (PCN), a pathogen-derived metabolite, leading to modulation of innate immune responses against virulent pathogens. On exposure to exogenous PCN, P.aeruginosa and other xenobiotic immunostimulant such as R24, activates immune response genes, including irg-4, irg-5, mul-1, drd-50, cyp-35C1 and ugt-30, probably via direct interaction with their promoters, and independent of the p38 MAPK pmk-1 pathway. Exhibits higher affinity to R24 than PCN and thus induces stronger immune response. Binds its own promoter thereby autoregulating its expression in the head hypodermis and the pharynx. Possibly plays a role in lipid storage or catabolism. The polypeptide is Nuclear hormone receptor family member nhr-86 (nhr-86) (Caenorhabditis elegans).